The chain runs to 951 residues: Plasma membrane ATPase (951 aa).

A run of 4 helical transmembrane segments spans residues 61–81 (FLGFMWNPLSWVMEMAAIMAI), 93–113 (WEDFVGIIVLLVINSTISFIE), 243–263 (IGNFCICSIAVGIVIEIIVMF), and 277–297 (LLVLLIGGIPIAMPTVLSVTM). Asp-329 acts as the 4-aspartylphosphate intermediate in catalysis. Positions 588 and 592 each coordinate Mg(2+). Transmembrane regions (helical) follow at residues 647-667 (IYAVSITIRIVLGFLLIALIW), 671-691 (FSPFMVLIIAILNDGTIMTIS), 709-729 (IFATGIVLGSYLALMTVIFFW), 752-772 (EMMSALYLQVSIVSQALIFVT), 785-805 (LLLVTAFMLAQLVATFLAVYA), and 814-834 (GIGWGWAGVIWLYSIVFYFPL).

Belongs to the cation transport ATPase (P-type) (TC 3.A.3) family. Type IIIA subfamily.

The protein localises to the cell membrane. It catalyses the reaction ATP + H2O + H(+)(in) = ADP + phosphate + 2 H(+)(out). The plasma membrane ATPase of plants and fungi is a hydrogen ion pump. The proton gradient it generates drives the active transport of nutrients by H(+)-symport. The resulting external acidification and/or internal alkinization may mediate growth responses. This is Plasma membrane ATPase from Oryza sativa subsp. japonica (Rice).